A 555-amino-acid chain; its full sequence is Phosphoglucomutase (555 aa).

Substrate-binding positions include T45, R49, 148 to 149 (SH), and K158. S148 (phosphoserine intermediate) is an active-site residue. S148 contributes to the Mg(2+) binding site. Mg(2+) contacts are provided by D306, D308, and D310. Residues 310–311 (DR) and 393–395 (EES) each bind substrate.

Belongs to the phosphohexose mutase family. The cofactor is Mg(2+).

It carries out the reaction alpha-D-glucose 1-phosphate = alpha-D-glucose 6-phosphate. In terms of biological role, this enzyme participates in both the breakdown and synthesis of glucose. The chain is Phosphoglucomutase (celB) from Komagataeibacter xylinus (Gluconacetobacter xylinus).